The sequence spans 187 residues: UPF0301 protein ECA3925 (187 aa).

It belongs to the UPF0301 (AlgH) family.

The chain is UPF0301 protein ECA3925 from Pectobacterium atrosepticum (strain SCRI 1043 / ATCC BAA-672) (Erwinia carotovora subsp. atroseptica).